The chain runs to 447 residues: Methionine aminopeptidase 2-2 (447 aa).

Residues 1–89 (MAAQTAPELA…PRIPLTTLFP (89 aa)) are disordered. The segment covering 15 to 30 (NKNSGSAEANVVSNGG) has biased composition (polar residues). Residues 34–47 (DDAENEGDSDDDKD) show a composition bias toward acidic residues. Residues 59–73 (KKKKKKRSKKKKKAA) are compositionally biased toward basic residues. Histidine 197 lines the substrate pocket. Positions 217, 228, and 297 each coordinate a divalent metal cation. Residue histidine 305 coordinates substrate. A divalent metal cation contacts are provided by glutamate 333 and glutamate 428.

The protein belongs to the peptidase M24A family. Methionine aminopeptidase eukaryotic type 2 subfamily. The cofactor is Co(2+). Zn(2+) is required as a cofactor. Mn(2+) serves as cofactor. It depends on Fe(2+) as a cofactor.

It is found in the cytoplasm. It catalyses the reaction Release of N-terminal amino acids, preferentially methionine, from peptides and arylamides.. Functionally, cotranslationally removes the N-terminal methionine from nascent proteins. The N-terminal methionine is often cleaved when the second residue in the primary sequence is small and uncharged (Met-Ala-, Cys, Gly, Pro, Ser, Thr, or Val). This is Methionine aminopeptidase 2-2 from Arthroderma otae (strain ATCC MYA-4605 / CBS 113480) (Microsporum canis).